The following is a 253-amino-acid chain: Glucosamine-6-phosphate deaminase (253 aa).

Asp-67 acts as the Proton acceptor; for enolization step in catalysis. The For ring-opening step role is filled by Asn-136. His-138 functions as the Proton acceptor; for ring-opening step in the catalytic mechanism. The active-site For ring-opening step is the Glu-143.

The protein belongs to the glucosamine/galactosamine-6-phosphate isomerase family. NagB subfamily.

The enzyme catalyses alpha-D-glucosamine 6-phosphate + H2O = beta-D-fructose 6-phosphate + NH4(+). Its pathway is amino-sugar metabolism; N-acetylneuraminate degradation; D-fructose 6-phosphate from N-acetylneuraminate: step 5/5. In terms of biological role, catalyzes the reversible isomerization-deamination of glucosamine 6-phosphate (GlcN6P) to form fructose 6-phosphate (Fru6P) and ammonium ion. The protein is Glucosamine-6-phosphate deaminase of Thermoanaerobacter sp. (strain X514).